The following is a 246-amino-acid chain: MQIDLNADLGEGCANDEALLALISSANIACGWHAGDAATMVQTVKWALERGVAIGAHPSYPDRENFGRTEMQRDPEHVYADVLYQIGALDAIVRAQGGELHHVKPHGALYNQAVRDPALARAIVRAVRDFDADLVFFGLAGSQMIDIAREAGLRVKQEVFADRGYNPDGTLVKRGSPGALHEDEEVALNQTLTMVREKRVRAIDGTWVPIQAETVCLHGDGAHALAFARRIRERLGAEGIAVRAGD.

It belongs to the LamB/PxpA family. As to quaternary structure, forms a complex composed of PxpA, PxpB and PxpC.

The enzyme catalyses 5-oxo-L-proline + ATP + 2 H2O = L-glutamate + ADP + phosphate + H(+). Catalyzes the cleavage of 5-oxoproline to form L-glutamate coupled to the hydrolysis of ATP to ADP and inorganic phosphate. In Cupriavidus necator (strain ATCC 17699 / DSM 428 / KCTC 22496 / NCIMB 10442 / H16 / Stanier 337) (Ralstonia eutropha), this protein is 5-oxoprolinase subunit A.